The chain runs to 627 residues: Chaperone protein HtpG (627 aa).

Positions 1-339 are a; substrate-binding; that stretch reads MKGQETRGFQ…SNDLPLNVSR (339 aa). A b region spans residues 340–555; the sequence is EILQDSRVTQ…ADEMSTQMAK (216 aa). Positions 556-627 are c; the sequence is LFAAAGQQAP…IRRMNQLLSA (72 aa).

Belongs to the heat shock protein 90 family. In terms of assembly, homodimer.

It is found in the cytoplasm. Functionally, molecular chaperone. Has ATPase activity. The polypeptide is Chaperone protein HtpG (Pectobacterium atrosepticum (strain SCRI 1043 / ATCC BAA-672) (Erwinia carotovora subsp. atroseptica)).